Consider the following 625-residue polypeptide: Chaperone protein HtpG (625 aa).

The a; substrate-binding stretch occupies residues 1-332 (MSNKQNTAVQ…TEDLSLNVSR (332 aa)). The b stretch occupies residues 333 to 545 (EIVQSSPVMS…KDAMDSQMER (213 aa)). Positions 546 to 625 (MMKMMQQEMP…ELIEAATLSR (80 aa)) are c.

This sequence belongs to the heat shock protein 90 family. In terms of assembly, homodimer.

It is found in the cytoplasm. Its function is as follows. Molecular chaperone. Has ATPase activity. This chain is Chaperone protein HtpG, found in Chlorobium luteolum (strain DSM 273 / BCRC 81028 / 2530) (Pelodictyon luteolum).